We begin with the raw amino-acid sequence, 352 residues long: Iron-sulfur cluster carrier protein (352 aa).

114–121 contacts ATP; the sequence is GKGGVGKS.

This sequence belongs to the Mrp/NBP35 ATP-binding proteins family. In terms of assembly, homodimer. Interacts with BrxC.

Binds and transfers iron-sulfur (Fe-S) clusters to target apoproteins. Can hydrolyze ATP. Functionally, negatively regulates the expression of hpr/scoC. The effect on hpr/scoC may be indirect. The sequence is that of Iron-sulfur cluster carrier protein (salA) from Bacillus subtilis (strain 168).